Consider the following 297-residue polypeptide: 33 kDa chaperonin (297 aa).

2 disulfides stabilise this stretch: Cys233/Cys235 and Cys267/Cys270.

Belongs to the HSP33 family. In terms of processing, under oxidizing conditions two disulfide bonds are formed involving the reactive cysteines. Under reducing conditions zinc is bound to the reactive cysteines and the protein is inactive.

It localises to the cytoplasm. Redox regulated molecular chaperone. Protects both thermally unfolding and oxidatively damaged proteins from irreversible aggregation. Plays an important role in the bacterial defense system toward oxidative stress. This is 33 kDa chaperonin from Haemophilus ducreyi (strain 35000HP / ATCC 700724).